A 506-amino-acid polypeptide reads, in one-letter code: SPbeta prophage-derived uncharacterized protein YonE (506 aa).

The disordered stretch occupies residues 473 to 506; sequence YTFTGNEVGRPNEGNKNNDNTVKSATSNGNDNPI. Over residues 486-506 the composition is skewed to polar residues; the sequence is GNKNNDNTVKSATSNGNDNPI.

In Bacillus subtilis (strain 168), this protein is SPbeta prophage-derived uncharacterized protein YonE (yonE).